The following is a 463-amino-acid chain: GTPase Der (463 aa).

EngA-type G domains lie at K2–K164 and I198–T369. GTP is bound by residues G8–S15, D55–L59, N116–D119, G204–S211, D251–I255, and N315–D318. A KH-like domain is found at Q370–S454.

The protein belongs to the TRAFAC class TrmE-Era-EngA-EngB-Septin-like GTPase superfamily. EngA (Der) GTPase family. As to quaternary structure, associates with the 50S ribosomal subunit.

Functionally, GTPase that plays an essential role in the late steps of ribosome biogenesis. In Campylobacter fetus subsp. fetus (strain 82-40), this protein is GTPase Der.